The sequence spans 252 residues: Triosephosphate isomerase (252 aa).

10-12 provides a ligand contact to substrate; that stretch reads NWK. Residue His96 is the Electrophile of the active site. Residue Glu168 is the Proton acceptor of the active site. Substrate-binding positions include Gly174, Ser214, and 235 to 236; that span reads GG.

Belongs to the triosephosphate isomerase family. As to quaternary structure, homodimer.

It localises to the cytoplasm. It carries out the reaction D-glyceraldehyde 3-phosphate = dihydroxyacetone phosphate. It functions in the pathway carbohydrate biosynthesis; gluconeogenesis. Its pathway is carbohydrate degradation; glycolysis; D-glyceraldehyde 3-phosphate from glycerone phosphate: step 1/1. Involved in the gluconeogenesis. Catalyzes stereospecifically the conversion of dihydroxyacetone phosphate (DHAP) to D-glyceraldehyde-3-phosphate (G3P). This Lactococcus lactis subsp. cremoris (strain MG1363) protein is Triosephosphate isomerase.